We begin with the raw amino-acid sequence, 483 residues long: Probable 4-aminobutyrate aminotransferase, mitochondrial (483 aa).

A pyridoxal 5'-phosphate-binding site is contributed by 148-149 (GT). Arginine 204 serves as a coordination point for substrate. Lysine 341 bears the N6-(pyridoxal phosphate)lysine mark. Threonine 365 provides a ligand contact to pyridoxal 5'-phosphate.

Belongs to the class-III pyridoxal-phosphate-dependent aminotransferase family. In terms of assembly, homodimer. Pyridoxal 5'-phosphate serves as cofactor.

Its subcellular location is the mitochondrion matrix. The enzyme catalyses 4-aminobutanoate + 2-oxoglutarate = succinate semialdehyde + L-glutamate. It catalyses the reaction (S)-3-amino-2-methylpropanoate + 2-oxoglutarate = 2-methyl-3-oxopropanoate + L-glutamate. This chain is Probable 4-aminobutyrate aminotransferase, mitochondrial (gta-1), found in Caenorhabditis elegans.